Here is a 273-residue protein sequence, read N- to C-terminus: Undecaprenyl-diphosphatase (273 aa).

Transmembrane regions (helical) follow at residues 13–35, 45–62, 82–102, 108–128, 186–206, 219–239, and 250–270; these read GLVE…VFGN, VFEI…VFEY, FVLN…LFDK, LFNP…ILWV, TEFS…YDVL, LILI…KALL, and FAYY…SGWI.

This sequence belongs to the UppP family.

Its subcellular location is the cell inner membrane. It carries out the reaction di-trans,octa-cis-undecaprenyl diphosphate + H2O = di-trans,octa-cis-undecaprenyl phosphate + phosphate + H(+). Its function is as follows. Catalyzes the dephosphorylation of undecaprenyl diphosphate (UPP). Confers resistance to bacitracin. This Neisseria gonorrhoeae (strain ATCC 700825 / FA 1090) protein is Undecaprenyl-diphosphatase.